The chain runs to 498 residues: Lysine--tRNA ligase (498 aa).

Mg(2+) is bound by residues Glu411 and Glu418.

The protein belongs to the class-II aminoacyl-tRNA synthetase family. In terms of assembly, homodimer. The cofactor is Mg(2+).

The protein localises to the cytoplasm. The enzyme catalyses tRNA(Lys) + L-lysine + ATP = L-lysyl-tRNA(Lys) + AMP + diphosphate. This is Lysine--tRNA ligase from Enterococcus faecalis (strain ATCC 700802 / V583).